The primary structure comprises 464 residues: GDNF family receptor alpha-2 (464 aa).

The first 21 residues, 1 to 21 (MILANVFCLFFFLDETLRSLA), serve as a signal peptide directing secretion. Intrachain disulfides connect Cys-40-Cys-93, Cys-47-Cys-53, Cys-63-Cys-78, Cys-95-Cys-105, Cys-161-Cys-222, Cys-168-Cys-174, Cys-185-Cys-200, Cys-195-Cys-241, Cys-224-Cys-229, Cys-251-Cys-323, Cys-258-Cys-264, Cys-275-Cys-293, Cys-285-Cys-347, and Cys-325-Cys-335. N-linked (GlcNAc...) asparagine glycosylation is present at Asn-52. N-linked (GlcNAc...) asparagine glycosylation is found at Asn-357 and Asn-413. Ser-444 carries the GPI-anchor amidated serine lipid modification. Residues 445–464 (RARPSAALTVLSVLMLKLAL) constitute a propeptide, removed in mature form.

This sequence belongs to the GDNFR family. Interacts with NRTN ligand and RET: forms a 2:2:2 ternary complex composed of NRTN ligand, GFRA2 and RET receptor. Also forms a 4:4:4 tetrameric complex composed of 4 copies of NRTN ligand, GFRA2 and RET receptor, which prevents endocytosis of RET. Interacts with SORL1.

It is found in the cell membrane. Receptor for neurturin (NRTN), a growth factor that supports the survival of sympathetic neurons. NRTN-binding leads to autophosphorylation and activation of the RET receptor. Also able to mediate GDNF signaling through the RET tyrosine kinase receptor. This Pongo abelii (Sumatran orangutan) protein is GDNF family receptor alpha-2 (GFRA2).